A 418-amino-acid polypeptide reads, in one-letter code: Glutamyl-tRNA(Gln) amidotransferase subunit D (418 aa).

Residues 74–405 (KNISILSTGG…EESKELMSKN (332 aa)) form the Asparaginase/glutaminase domain. Active-site residues include Thr-84, Thr-160, Asp-161, and Lys-237.

This sequence belongs to the asparaginase 1 family. GatD subfamily. Heterodimer of GatD and GatE.

It carries out the reaction L-glutamyl-tRNA(Gln) + L-glutamine + ATP + H2O = L-glutaminyl-tRNA(Gln) + L-glutamate + ADP + phosphate + H(+). Allows the formation of correctly charged Gln-tRNA(Gln) through the transamidation of misacylated Glu-tRNA(Gln) in organisms which lack glutaminyl-tRNA synthetase. The reaction takes place in the presence of glutamine and ATP through an activated gamma-phospho-Glu-tRNA(Gln). The GatDE system is specific for glutamate and does not act on aspartate. The sequence is that of Glutamyl-tRNA(Gln) amidotransferase subunit D from Methanococcus maripaludis (strain C5 / ATCC BAA-1333).